The following is a 170-amino-acid chain: Non-classical export protein 102 (170 aa).

Topologically, residues 1 to 11 (MLAIGDVILRA) are cytoplasmic. An MARVEL domain is found at 6-141 (DVILRAFNFV…TFIFIASAIF (136 aa)). The helical transmembrane segment at 12–32 (FNFVFLVIALGLTGSLAATTI) threads the bilayer. Residues 33–38 (TQHNPQ) are Extracellular-facing. A helical membrane pass occupies residues 39–61 (INFAVFAAAFGLLTSSFYGVFAY). Residues 62–76 (FVAAFAWPVILFVFD) are Cytoplasmic-facing. The chain crosses the membrane as a helical span at residues 77 to 97 (FLNFVFTFAAATAIAAGIRAH). Topologically, residues 98 to 125 (SCSNQDYLDDNNIAQGSSGRCRKAQAST) are extracellular. A helical membrane pass occupies residues 126–146 (AFLYFSTFIFIASAIFSAISL). Over 147 to 170 (SKGGLFGHSSRPAPRTGVPTMSQV) the chain is Cytoplasmic.

It belongs to the NCE102 family.

It localises to the cell membrane. Its function is as follows. Involved in membrane organization. Involved in a novel pathway of export of proteins that lack a cleavable signal sequence. Non-classical export pathway also functions as an alternative clearance/detoxification pathway to eliminate damaged material, when the basic repair pathway is not sufficient. Regulates actin organization and subsequent morphogenesis and pathogenesis. This is Non-classical export protein 102 from Candida albicans (strain SC5314 / ATCC MYA-2876) (Yeast).